Consider the following 264-residue polypeptide: Type III pantothenate kinase (264 aa).

6–13 (DVGNTNIK) serves as a coordination point for ATP. 108-111 (GSDR) contacts substrate. The active-site Proton acceptor is D110. T134 is a binding site for ATP.

The protein belongs to the type III pantothenate kinase family. Homodimer. It depends on NH4(+) as a cofactor. K(+) is required as a cofactor.

It is found in the cytoplasm. It catalyses the reaction (R)-pantothenate + ATP = (R)-4'-phosphopantothenate + ADP + H(+). Its pathway is cofactor biosynthesis; coenzyme A biosynthesis; CoA from (R)-pantothenate: step 1/5. Its function is as follows. Catalyzes the phosphorylation of pantothenate (Pan), the first step in CoA biosynthesis. The polypeptide is Type III pantothenate kinase (Ehrlichia canis (strain Jake)).